The chain runs to 83 residues: MVTIRLARGGSKKRPFYHLTVTNSRNARDGRFVERIGFFNPVATGGEVRLSVDQERATYWLAQGAQPSERVAQLLKDAAKANA.

The protein belongs to the bacterial ribosomal protein bS16 family.

The protein is Small ribosomal subunit protein bS16 of Pseudomonas aeruginosa (strain UCBPP-PA14).